Reading from the N-terminus, the 288-residue chain is Diaminopimelate epimerase (288 aa).

The substrate site is built by Asn13, Gln46, and Asn66. Catalysis depends on Cys75, which acts as the Proton donor. Substrate-binding positions include Gly76–Asn77, Asn166, Asn199, and Glu217–Arg218. Cys226 functions as the Proton acceptor in the catalytic mechanism. Position 227 to 228 (Gly227 to Thr228) interacts with substrate.

The protein belongs to the diaminopimelate epimerase family. In terms of assembly, homodimer.

The protein localises to the cytoplasm. It catalyses the reaction (2S,6S)-2,6-diaminopimelate = meso-2,6-diaminopimelate. The protein operates within amino-acid biosynthesis; L-lysine biosynthesis via DAP pathway; DL-2,6-diaminopimelate from LL-2,6-diaminopimelate: step 1/1. In terms of biological role, catalyzes the stereoinversion of LL-2,6-diaminopimelate (L,L-DAP) to meso-diaminopimelate (meso-DAP), a precursor of L-lysine and an essential component of the bacterial peptidoglycan. The protein is Diaminopimelate epimerase of Cupriavidus pinatubonensis (strain JMP 134 / LMG 1197) (Cupriavidus necator (strain JMP 134)).